The following is an 85-amino-acid chain: U4-theraphotoxin-Hhn1a (85 aa).

A signal peptide spans 1 to 22 (MKVTLIAILTCAAVLVLRTTAA). Positions 23 to 48 (EELEAESQLMEVGMPDTELAAVDEER) are excised as a propeptide. Disulfide bonds link Cys52–Cys66, Cys56–Cys77, and Cys71–Cys82.

This sequence belongs to the neurotoxin 12 (Hwtx-2) family. 02 (Hwtx-2) subfamily. In terms of assembly, monomer. Expressed by the venom gland.

The protein resides in the secreted. Functionally, neurotoxin active on both insects and mammals. The polypeptide is U4-theraphotoxin-Hhn1a (Cyriopagopus hainanus (Chinese bird spider)).